Reading from the N-terminus, the 316-residue chain is Thymidylate synthase (316 aa).

DUMP contacts are provided by residues arginine 23 and 178–179 (RR). Residue cysteine 198 is the Nucleophile of the active site. DUMP-binding positions include 218 to 221 (RSGD), asparagine 229, and 259 to 261 (HIY). Aspartate 221 is a (6R)-5,10-methylene-5,6,7,8-tetrahydrofolate binding site. Residue alanine 315 participates in (6R)-5,10-methylene-5,6,7,8-tetrahydrofolate binding.

This sequence belongs to the thymidylate synthase family. Bacterial-type ThyA subfamily. As to quaternary structure, homodimer.

The protein localises to the cytoplasm. It carries out the reaction dUMP + (6R)-5,10-methylene-5,6,7,8-tetrahydrofolate = 7,8-dihydrofolate + dTMP. The protein operates within pyrimidine metabolism; dTTP biosynthesis. Functionally, catalyzes the reductive methylation of 2'-deoxyuridine-5'-monophosphate (dUMP) to 2'-deoxythymidine-5'-monophosphate (dTMP) while utilizing 5,10-methylenetetrahydrofolate (mTHF) as the methyl donor and reductant in the reaction, yielding dihydrofolate (DHF) as a by-product. This enzymatic reaction provides an intracellular de novo source of dTMP, an essential precursor for DNA biosynthesis. In Latilactobacillus sakei subsp. sakei (strain 23K) (Lactobacillus sakei subsp. sakei), this protein is Thymidylate synthase.